The primary structure comprises 531 residues: Peptide chain release factor 3 (531 aa).

One can recognise a tr-type G domain in the interval 10 to 278 (RRRRTFAIIS…SLIDWAPAPK (269 aa)). GTP-binding positions include 19–26 (SHPDAGKT), 87–91 (DTPGH), and 141–144 (NKYD).

The protein belongs to the TRAFAC class translation factor GTPase superfamily. Classic translation factor GTPase family. PrfC subfamily.

The protein localises to the cytoplasm. Its function is as follows. Increases the formation of ribosomal termination complexes and stimulates activities of RF-1 and RF-2. It binds guanine nucleotides and has strong preference for UGA stop codons. It may interact directly with the ribosome. The stimulation of RF-1 and RF-2 is significantly reduced by GTP and GDP, but not by GMP. In Neisseria meningitidis serogroup C / serotype 2a (strain ATCC 700532 / DSM 15464 / FAM18), this protein is Peptide chain release factor 3.